A 155-amino-acid chain; its full sequence is MARMKLNARMSTGGKAPRKQLAYKAVRKAAPPTIGVKLPNSYRPGDQTVCKPAPPTDGVKEPHRYRPGKMGLREIRKYKKNARFFISKLPFHRLVRKITQNLKAHLRFQSTAMPAPEEVSEAYLVKLFEDAIHAKRVTLVPKDIQLARCIGGVLA.

Residues 34–59 (IGVKLPNSYRPGDQTVCKPAPPTDGV) are disordered.

This sequence belongs to the histone H3 family. In terms of assembly, the nucleosome is a histone octamer containing two molecules each of H2A, H2B, H3 and H4 assembled in one H3-H4 heterotetramer and two H2A-H2B heterodimers. The octamer wraps approximately 147 bp of DNA. In terms of tissue distribution, pollen specific.

It localises to the nucleus. The protein resides in the chromosome. In terms of biological role, core component of nucleosome. Nucleosomes wrap and compact DNA into chromatin, limiting DNA accessibility to the cellular machineries which require DNA as a template. Histones thereby play a central role in transcription regulation, DNA repair, DNA replication and chromosomal stability. DNA accessibility is regulated via a complex set of post-translational modifications of histones, also called histone code, and nucleosome remodeling. This is Histone H3-like 3 (leH3) from Lilium longiflorum (Trumpet lily).